A 546-amino-acid polypeptide reads, in one-letter code: Probable ATP-dependent RNA helicase DDX56 (546 aa).

Residues 7 to 35 (LGFEHMGLDHRLLQAVTDLGWSRPTLIQE) carry the Q motif motif. A Helicase ATP-binding domain is found at 38 to 218 (IPLALEGKDL…ELVLHNPVTL (181 aa)). 51 to 58 (ARTGSGKT) serves as a coordination point for ATP. Phosphoserine is present on S126. T141 carries the post-translational modification Phosphothreonine. The DEAD box signature appears at 166-169 (DEAD). Residues 230–424 (QLQQFQVVCE…PYQFHMEEIE (195 aa)) form the Helicase C-terminal domain. Disordered stretches follow at residues 323-342 (PVKGKHRGKGPKRDKASDPE) and 504-546 (LVHP…AAPS). The span at 505–524 (VHPHKKRKKPLASKKAKKAK) shows a compositional bias: basic residues. Phosphoserine is present on S531.

It belongs to the DEAD box helicase family. DDX56/DBP9 subfamily. As to quaternary structure, may form homooligomeric complexes. Interacts with IRF3. Interacts with OCT4 and POU5F1.

Its subcellular location is the nucleus. It localises to the nucleolus. The enzyme catalyses ATP + H2O = ADP + phosphate + H(+). Nucleolar RNA helicase that plays a role in various biological processes including innate immunity, ribosome biogenesis or nucleolus organization. Plays an essential role in maintaining nucleolar integrity in planarian stem cells. Maintains embryonic stem cells proliferation by conventional regulation of ribosome assembly and interaction with OCT4 and POU5F1 complex. Regulates antiviral innate immunity by inhibiting the virus-triggered signaling nuclear translocation of IRF3. Mechanistically, acts by disrupting the interaction between IRF3 and importin IPO5. May play a role in later stages of the processing of the pre-ribosomal particles leading to mature 60S ribosomal subunits. Has intrinsic ATPase activity. The sequence is that of Probable ATP-dependent RNA helicase DDX56 (DDX56) from Bos taurus (Bovine).